Consider the following 328-residue polypeptide: UDP-glucose 4-epimerase (328 aa).

A substrate-binding site is contributed by Thr-119. Tyr-143 (proton acceptor) is an active-site residue.

Belongs to the NAD(P)-dependent epimerase/dehydratase family. The cofactor is NAD(+).

It catalyses the reaction UDP-alpha-D-glucose = UDP-alpha-D-galactose. Its pathway is carbohydrate metabolism; galactose metabolism. The protein operates within glycan metabolism; exopolysaccharide biosynthesis. This Rhizobium meliloti (strain 1021) (Ensifer meliloti) protein is UDP-glucose 4-epimerase (exoB).